The sequence spans 190 residues: MTVGVLALQGDFREHCAVLRRIGVEPIEVRLPRQLEQVERLIIPGGESTTIGRLLTIYQMLEPIRARAGRDLAIWGTCAGAILLASVVTDQKQGGQPTLSLMNLTIQRNAYGSQLDSFEAPITMPIIGEKPLQGVFIRAPRIISVGSGCEAVGWLEDGSVVAARQGRLLATTFHPELTDDDRVHRLFLEL.

Position 46–48 (46–48) interacts with L-glutamine; that stretch reads GES. Catalysis depends on C78, which acts as the Nucleophile. Residues R108 and 137–138 contribute to the L-glutamine site; that span reads IR. Residues H174 and E176 each act as charge relay system in the active site.

This sequence belongs to the glutaminase PdxT/SNO family. In terms of assembly, in the presence of PdxS, forms a dodecamer of heterodimers. Only shows activity in the heterodimer.

It carries out the reaction aldehydo-D-ribose 5-phosphate + D-glyceraldehyde 3-phosphate + L-glutamine = pyridoxal 5'-phosphate + L-glutamate + phosphate + 3 H2O + H(+). The enzyme catalyses L-glutamine + H2O = L-glutamate + NH4(+). Its pathway is cofactor biosynthesis; pyridoxal 5'-phosphate biosynthesis. Functionally, catalyzes the hydrolysis of glutamine to glutamate and ammonia as part of the biosynthesis of pyridoxal 5'-phosphate. The resulting ammonia molecule is channeled to the active site of PdxS. This Chloroflexus aurantiacus (strain ATCC 29366 / DSM 635 / J-10-fl) protein is Pyridoxal 5'-phosphate synthase subunit PdxT.